The sequence spans 121 residues: Small ribosomal subunit protein eS24 (121 aa).

This sequence belongs to the eukaryotic ribosomal protein eS24 family.

This chain is Small ribosomal subunit protein eS24, found in Pyrobaculum aerophilum (strain ATCC 51768 / DSM 7523 / JCM 9630 / CIP 104966 / NBRC 100827 / IM2).